The sequence spans 644 residues: Biosynthetic arginine decarboxylase (644 aa).

N6-(pyridoxal phosphate)lysine is present on lysine 105. 287–297 (LDVGGGLGIDY) is a binding site for substrate.

Belongs to the Orn/Lys/Arg decarboxylase class-II family. SpeA subfamily. Mg(2+) is required as a cofactor. Pyridoxal 5'-phosphate serves as cofactor.

It catalyses the reaction L-arginine + H(+) = agmatine + CO2. Its function is as follows. Catalyzes the biosynthesis of agmatine from arginine. In Parasynechococcus marenigrum (strain WH8102), this protein is Biosynthetic arginine decarboxylase.